The chain runs to 388 residues: MNLHEYQAKQLFAQYGLPTPEGYACSTPCQAEEAASKIGSGPWVVKCQVHAGGRGKAGGVKCVESKEAIHAFAEQWLGKRLVTYQTDAHGQPVRQILVEGATEIARELYLGAVIDRSSRRVVFMASTEGGVEIEQVAQKTPHLIHRVALDPLTGPQPYQGRELAFKLGLSGKQAQQFGQIFLGLATLFLQCDLTMAEINPLVITPQGDLLCLDGKLDVDSNALFRQPTLLEMEDPAQNDAREAHAAQWELNYVALEGNIGCMVNGAGLAMGTMDIVKLHGGAPANFLDVGGGATKERVTEAFKIILSDEHVRAVLVNIFGGIVRCDLIADGIIGAVAEVGVHVPVVVRLEGNNAELGTRILADSGLNIIAATSLTDAARQVVSAVEGK.

Residues 9 to 244 enclose the ATP-grasp domain; that stretch reads KQLFAQYGLP…PAQNDAREAH (236 aa). Residues Lys46, 53-55, Glu99, Thr102, and Glu107 contribute to the ATP site; that span reads GRG. Residues Asn199 and Asp213 each coordinate Mg(2+). Residues Asn264 and 321–323 contribute to the substrate site; that span reads GIV.

This sequence belongs to the succinate/malate CoA ligase beta subunit family. In terms of assembly, heterotetramer of two alpha and two beta subunits. The cofactor is Mg(2+).

It carries out the reaction succinate + ATP + CoA = succinyl-CoA + ADP + phosphate. It catalyses the reaction GTP + succinate + CoA = succinyl-CoA + GDP + phosphate. It participates in carbohydrate metabolism; tricarboxylic acid cycle; succinate from succinyl-CoA (ligase route): step 1/1. Functionally, succinyl-CoA synthetase functions in the citric acid cycle (TCA), coupling the hydrolysis of succinyl-CoA to the synthesis of either ATP or GTP and thus represents the only step of substrate-level phosphorylation in the TCA. The beta subunit provides nucleotide specificity of the enzyme and binds the substrate succinate, while the binding sites for coenzyme A and phosphate are found in the alpha subunit. The chain is Succinate--CoA ligase [ADP-forming] subunit beta from Edwardsiella ictaluri (strain 93-146).